The sequence spans 469 residues: Ribulose bisphosphate carboxylase large chain (469 aa).

An N6,N6,N6-trimethyllysine modification is found at lysine 8. The substrate site is built by asparagine 117 and threonine 167. The Proton acceptor role is filled by lysine 169. Lysine 171 provides a ligand contact to substrate. 3 residues coordinate Mg(2+): lysine 195, aspartate 197, and glutamate 198. An N6-carboxylysine modification is found at lysine 195. Catalysis depends on histidine 288, which acts as the Proton acceptor. Arginine 289, histidine 321, and serine 373 together coordinate substrate.

Belongs to the RuBisCO large chain family. Type I subfamily. As to quaternary structure, heterohexadecamer of 8 large chains and 8 small chains; disulfide-linked. The disulfide link is formed within the large subunit homodimers. The cofactor is Mg(2+). The disulfide bond which can form in the large chain dimeric partners within the hexadecamer appears to be associated with oxidative stress and protein turnover.

It is found in the plastid. The protein localises to the chloroplast. The catalysed reaction is 2 (2R)-3-phosphoglycerate + 2 H(+) = D-ribulose 1,5-bisphosphate + CO2 + H2O. It carries out the reaction D-ribulose 1,5-bisphosphate + O2 = 2-phosphoglycolate + (2R)-3-phosphoglycerate + 2 H(+). RuBisCO catalyzes two reactions: the carboxylation of D-ribulose 1,5-bisphosphate, the primary event in carbon dioxide fixation, as well as the oxidative fragmentation of the pentose substrate in the photorespiration process. Both reactions occur simultaneously and in competition at the same active site. This Akania bidwillii (Turnipwood) protein is Ribulose bisphosphate carboxylase large chain.